Reading from the N-terminus, the 373-residue chain is P2Y purinoceptor 1 (373 aa).

The Extracellular portion of the chain corresponds to 1–51; it reads MTEVPWSVVPNGTDAAFLAGLGSLWGNSTVASTAAVSSSFQCALTKTGFQF. 2 N-linked (GlcNAc...) asparagine glycosylation sites follow: Asn11 and Asn27. Disulfide bonds link Cys42–Cys296 and Cys124–Cys202. Lys46 contacts ADP. The helical transmembrane segment at 52-74 threads the bilayer; it reads YYLPAVYILVFIIGFLGNSVAIW. The Cytoplasmic segment spans residues 75-87; sequence MFVFHMKPWSGIS. A helical membrane pass occupies residues 88 to 109; it reads VYMFNLALADFLYVLTLPALIF. Residues 110 to 125 lie on the Extracellular side of the membrane; sequence YYFNKTDWIFGDAMCK. Residue Asn113 is glycosylated (N-linked (GlcNAc...) asparagine). Residues 126–147 traverse the membrane as a helical segment; sequence LQRFIFHVNLYGSILFLTCISA. The Cytoplasmic segment spans residues 148–166; the sequence is HRYSGVVYPLKSLGRLKKK. Residues 167-188 traverse the membrane as a helical segment; it reads NAIYVSVLVWLIVVVAISPILF. The Extracellular segment spans residues 189–214; it reads YSGTGTRKNKTVTCYDTTSNDYLRSY. A glycan (N-linked (GlcNAc...) asparagine) is linked at Asn197. 203-205 is a binding site for ADP; it reads YDT. A helical membrane pass occupies residues 215–237; the sequence is FIYSMCTTVAMFCIPLVLILGCY. Topologically, residues 238-260 are cytoplasmic; the sequence is GLIVKALIYNDLDNSPLRRKSIY. Residues 261–284 form a helical membrane-spanning segment; that stretch reads LVIIVLTVFAVSYIPFHVMKTMNL. ADP contacts are provided by residues 283 to 287, 303 to 306, and Arg310; these read NLRAR and YATY. Residues 285–303 lie on the Extracellular side of the membrane; that stretch reads RARLDFQTPEMCDFNDRVY. The helical transmembrane segment at 304-325 threads the bilayer; the sequence is ATYQVTRGLASLNSCVDPILYF. At 326 to 373 the chain is on the cytoplasmic side; that stretch reads LAGDTFRRRLSRATRKASRRSEANLQSKSEEMTLNILSEFKQNGDTSL.

The protein belongs to the G-protein coupled receptor 1 family.

The protein resides in the cell membrane. In terms of biological role, receptor for extracellular adenine nucleotides such as ADP. In platelets, binding to ADP leads to mobilization of intracellular calcium ions via activation of phospholipase C, a change in platelet shape, and ultimately platelet aggregation. This is P2Y purinoceptor 1 (P2ry1) from Mus musculus (Mouse).